We begin with the raw amino-acid sequence, 617 residues long: Vacuolar protein sorting-associated protein 33A (617 aa).

Positions 268 to 287 (NFPSDGALPGGGGSGPRVEE) are disordered.

This sequence belongs to the STXBP/unc-18/SEC1 family. As to quaternary structure, component of the class C core vacuole/endosome tethering (CORVET) complex composed of at least Vps8, dor/Vps18, car/Vps33A and Vps16A; unlike in other species, Vps11 is not part of the Drosophila complex. Due to the reduced number of components the Drosophila CORVET complex is often referred to as the miniCORVET complex. Interacts with ema. Component of the homotypic fusion and vacuole protein sorting (HOPS) complex, composed of Vps16A, car/Vps33A, dor/Vps18, Vps39, Vps11 and lt/Vps41. The tethering complex core made up of Vps16A, car/Vps33A and dor/Vps18 and shared by both HOPS and CORVET, preferentially associates with CORVET specific Vps8 over HOPS specific lt/Vps41. Interacts with Syx17 (via SNARE domain); the interaction requires Vps16A, may involve additional components of the HOPS complex and may promote assembly of the Syx17-Snap29-Vamp7 trans-SNARE complex.

It is found in the early endosome. The protein resides in the late endosome membrane. The protein localises to the lysosome membrane. In terms of biological role, core component of the class C core vacuole/endosome tethering (CORVET) and the homotypic fusion and vacuole protein sorting (HOPS) tethering complexes involved in endo-lysosomal vesicle trafficking and lysosome biogenesis. The CORVET complex facilitates docking and fusion of endosomal vesicles during endosome maturation, acts upstream of HOPS, but is not involved in autophagic flux. The CORVET complex may cooperate with the early endosomal tether Rbsn-5 to mediate endosomal fusion. The HOPS complex facilitates docking and fusion of lysosomes with late endosomes and several other types of vesicles. The HOPS complex is also involved in autophagy and crinophagy (the elimination of unused secretory granules through their fusion with lysosomes). The HOPS complex probably instigates autophagosome-lysosome fusion by binding autophagosome associated Syx17/syntaxin 17 and promoting assembly of the trans-SNARE complex. Independent of Syx17/syntaxin 17 HOPS is involved in biosynthetic transport to lysosomes and lysosome-related organelles such as eye-pigment granules. Required for endocytic degradation of boss/bride of sevenless and N/Notch in developing ommatidia. This chain is Vacuolar protein sorting-associated protein 33A, found in Drosophila melanogaster (Fruit fly).